Here is a 436-residue protein sequence, read N- to C-terminus: Trigger factor (436 aa).

The PPIase FKBP-type domain maps to 161–246 (EDQLNIDFVG…VNSVSEPKLP (86 aa)).

It belongs to the FKBP-type PPIase family. Tig subfamily.

It is found in the cytoplasm. It carries out the reaction [protein]-peptidylproline (omega=180) = [protein]-peptidylproline (omega=0). Involved in protein export. Acts as a chaperone by maintaining the newly synthesized protein in an open conformation. Functions as a peptidyl-prolyl cis-trans isomerase. This chain is Trigger factor, found in Pseudomonas fluorescens (strain SBW25).